The chain runs to 84 residues: Turripeptide IX-01 (84 aa).

Positions Met1 to Ala21 are cleaved as a signal peptide. The propeptide occupies Thr22–His39. Cystine bridges form between Cys48–Cys70, Cys55–Cys74, and Cys60–Cys81.

In terms of tissue distribution, expressed by the venom duct.

It is found in the secreted. The sequence is that of Turripeptide IX-01 from Gemmula speciosa (Splendid gem-turris).